Consider the following 147-residue polypeptide: MTKKTKPESYAFSQNFPISADKARRVIDRIRGRSYEETLIILELLPYRAAYPILKFVCFAASNASSTSTSKKENLFISKAEVNERPAIKKLKPRARGRSFPIKKATCHITIVLTDLSFYFNELVEPQQEKNLLTKLYLNLRGLWDKK.

Belongs to the universal ribosomal protein uL22 family. In terms of assembly, part of the 50S ribosomal subunit.

The protein localises to the plastid. Its function is as follows. This protein binds specifically to 23S rRNA. The globular domain of the protein is located near the polypeptide exit tunnel on the outside of the subunit, while an extended beta-hairpin is found that lines the wall of the exit tunnel in the center of the 70S ribosome. This Cuscuta obtusiflora (Peruvian dodder) protein is Large ribosomal subunit protein uL22c (rpl22).